The sequence spans 445 residues: Phosphoglucosamine mutase (445 aa).

S102 (phosphoserine intermediate) is an active-site residue. S102, D240, D242, and D244 together coordinate Mg(2+). Residue S102 is modified to Phosphoserine.

The protein belongs to the phosphohexose mutase family. Mg(2+) is required as a cofactor. Activated by phosphorylation.

It catalyses the reaction alpha-D-glucosamine 1-phosphate = D-glucosamine 6-phosphate. Functionally, catalyzes the conversion of glucosamine-6-phosphate to glucosamine-1-phosphate. This chain is Phosphoglucosamine mutase, found in Mycobacterium ulcerans (strain Agy99).